Consider the following 505-residue polypeptide: Maturase K (505 aa).

This sequence belongs to the intron maturase 2 family. MatK subfamily.

Its subcellular location is the plastid. The protein localises to the chloroplast. In terms of biological role, usually encoded in the trnK tRNA gene intron. Probably assists in splicing its own and other chloroplast group II introns. This chain is Maturase K, found in Kunzea ericoides (White teatree).